A 615-amino-acid chain; its full sequence is NEDD8 ultimate buster 1 (615 aa).

2 coiled-coil regions span residues 36–70 (LALK…AIER) and 152–203 (KAMV…AAET). 3 consecutive UBA domains span residues 374-413 (YIDP…HITN), 424-470 (EEKE…LLSN), and 489-529 (SPSQ…LAHN). The Nuclear localization signal signature appears at 414–431 (RREELAQIRKEEKEKKRR). Residues 427–474 (EKKRRRLENIRFLKGMGYSTHAAQQVLHAASGNLDEALKILLSNPQMW) are NEDD8-binding 1. The interval 532–586 (SLPPELPLSPEDSLSPPATSPSDSAGTSSASTDEDMETEAVNEILEDIPEHEEDY) is disordered. The segment covering 539–562 (LSPEDSLSPPATSPSDSAGTSSAS) has biased composition (low complexity). The segment at 550 to 598 (TSPSDSAGTSSASTDEDMETEAVNEILEDIPEHEEDYLDSTLEDEEIII) is NEDD8-binding 2. Residues 563–586 (TDEDMETEAVNEILEDIPEHEEDY) are compositionally biased toward acidic residues.

As to quaternary structure, directly interacts with NEDD8 and PSMD4/S5a, a member of the regulatory subunit of the 26S proteasome. Isoform 1 binds to NEDD8 more efficiently than isoform 2. Interacts with AIPL1. The interaction with UBD via UBA domains facilitates the linking of UBD-conjugated target protein to the proteasome complex and accelerates UBD degradation and that of its conjugates. Widely expressed with lowest expression in the pancreas for isoform 1 and in leukocytes, liver, prostate and skeletal muscle for isoform 2.

The protein resides in the nucleus. In terms of biological role, specific down-regulator of the NEDD8 conjugation system. Recruits NEDD8, UBD, and their conjugates to the proteasome for degradation. Isoform 1 promotes the degradation of NEDD8 more efficiently than isoform 2. This Homo sapiens (Human) protein is NEDD8 ultimate buster 1 (NUB1).